The chain runs to 217 residues: Regulator of G-protein signaling 19 (217 aa).

Positions 1-29 are disordered; that stretch reads MPTPHEAEKQITGPEEADRPPSMSSHDTA. Phosphoserine occurs at positions 24 and 97. In terms of domain architecture, RGS spans 90 to 206; it reads SFDKLMHSPA…LSSPTYRALL (117 aa). S151 carries the phosphoserine; by MAPK1 and MAPK3 modification. An interaction with GIPC region spans residues 207–217; that stretch reads LQGPSQSSSEA.

Interacts with GIPC PDZ domain. Interacts with GNAO1. In terms of processing, fatty acylated. Heavily palmitoylated in the cysteine string motif. Phosphorylated, mainly on serine residues. In terms of tissue distribution, highest expression in lung. Placenta, liver and heart also express high levels of GAIP.

It is found in the membrane. Functionally, inhibits signal transduction by increasing the GTPase activity of G protein alpha subunits thereby driving them into their inactive GDP-bound form. Binds to G-alpha subfamily 1 members, with the order G(i)a3 &gt; G(i)a1 &gt; G(o)a &gt;&gt; G(z)a/G(i)a2. Activity on G(z)-alpha is inhibited by phosphorylation and palmitoylation of the G-protein. This is Regulator of G-protein signaling 19 (RGS19) from Homo sapiens (Human).